Reading from the N-terminus, the 317-residue chain is Transaldolase (317 aa).

Lys126 serves as the catalytic Schiff-base intermediate with substrate.

The protein belongs to the transaldolase family. Type 1 subfamily. Homodimer.

It localises to the cytoplasm. It catalyses the reaction D-sedoheptulose 7-phosphate + D-glyceraldehyde 3-phosphate = D-erythrose 4-phosphate + beta-D-fructose 6-phosphate. The protein operates within carbohydrate degradation; pentose phosphate pathway; D-glyceraldehyde 3-phosphate and beta-D-fructose 6-phosphate from D-ribose 5-phosphate and D-xylulose 5-phosphate (non-oxidative stage): step 2/3. In terms of biological role, transaldolase is important for the balance of metabolites in the pentose-phosphate pathway. The sequence is that of Transaldolase from Burkholderia ambifaria (strain MC40-6).